The following is a 591-amino-acid chain: L-fucose isomerase (591 aa).

Catalysis depends on proton acceptor residues E337 and D361. Mn(2+) contacts are provided by E337, D361, and H528.

It belongs to the L-fucose isomerase family. In terms of assembly, homohexamer. Requires Mn(2+) as cofactor.

It is found in the cytoplasm. The catalysed reaction is L-fucose = L-fuculose. Its pathway is carbohydrate degradation; L-fucose degradation; L-lactaldehyde and glycerone phosphate from L-fucose: step 1/3. In terms of biological role, converts the aldose L-fucose into the corresponding ketose L-fuculose. This is L-fucose isomerase from Salmonella paratyphi A (strain ATCC 9150 / SARB42).